Here is a 620-residue protein sequence, read N- to C-terminus: Pentatricopeptide repeat-containing protein At5g66520 (620 aa).

10 PPR repeats span residues 79–113, 114–148, 149–179, 180–210, 211–245, 246–280, 281–311, 312–346, 347–382, and 383–413; these read DTFL…SAPH, NAYT…GYEN, DVYA…IPEP, DDVS…MAEK, NAIS…DVEP, DNVS…RIRM, DSVL…IKKK, SVQA…GIKP, NVIT…NLKP, and TIEH…MPLK. The interval 418–493 is type E motif; the sequence is IWGALLKACR…VPGCSTISLE (76 aa). The interval 494–524 is type E(+) motif; the sequence is GTTHEFLAGDRSHPEIEKIQSKWRIMRRKLE. Positions 525 to 620 are type DYW motif; sequence ENGYVPELEE…DGKCSCGDYW (96 aa).

Belongs to the PPR family. PCMP-H subfamily.

The chain is Pentatricopeptide repeat-containing protein At5g66520 (PCMP-H61) from Arabidopsis thaliana (Mouse-ear cress).